Here is a 1354-residue protein sequence, read N- to C-terminus: Ubiquitin carboxyl-terminal hydrolase 47 (1354 aa).

A compositionally biased stretch (polar residues) spans 114–133; sequence EQPQLASDESGTADSSGLDD. Positions 114–139 are disordered; sequence EQPQLASDESGTADSSGLDDSTQEKF. One can recognise a USP domain in the interval 174 to 549; it reads VGLVNQAMTC…NAYMLMYRLK (376 aa). Cysteine 183 serves as the catalytic Nucleophile. The segment at 408-438 is disordered; sequence DVEDEKSPQTDSCTDSGAENEGSCHSDQMSN. Residues 416 to 438 show a composition bias toward polar residues; sequence QTDSCTDSGAENEGSCHSDQMSN. The active-site Proton acceptor is the histidine 488. Residues 863–882 show a composition bias toward polar residues; it reads LSLQQHQDGGNGDSSKSTEG. Disordered stretches follow at residues 863–1004 and 1314–1335; these read LSLQ…ESGK and LAKKESSRLQKTGHRVTYSPRK. The segment covering 920–930 has biased composition (basic and acidic residues); that stretch reads PEERSDSDVNN. Positions 933–949 are enriched in low complexity; sequence STSSVDSDILSSSHSSD. Residues 977–986 are compositionally biased toward basic and acidic residues; that stretch reads KANDGKKETW. Residues 987-1000 show a composition bias toward acidic residues; the sequence is DTAEEDSGTDSEYD.

The protein belongs to the peptidase C19 family. USP47 subfamily.

The protein resides in the cytoplasm. It catalyses the reaction Thiol-dependent hydrolysis of ester, thioester, amide, peptide and isopeptide bonds formed by the C-terminal Gly of ubiquitin (a 76-residue protein attached to proteins as an intracellular targeting signal).. Ubiquitin-specific protease that specifically deubiquitinates monoubiquitinated DNA polymerase beta (polb), stabilizing polb thereby playing a role in base-excision repair (BER). This chain is Ubiquitin carboxyl-terminal hydrolase 47 (usp47), found in Xenopus tropicalis (Western clawed frog).